We begin with the raw amino-acid sequence, 518 residues long: U-box domain-containing protein 57 (518 aa).

A coiled-coil region spans residues 86-142; the sequence is EEVRKVHILEEEIVTLKHQADTYLVQKEKAVTAYDQLKHERDNAVQQVNELRDQSTH. The 251-residue stretch at 159–409 folds into the Protein kinase domain; sequence FKNAREVGDT…RPDLLNEVWI (251 aa). The U-box domain maps to 434–508; sequence SVPAAFICPI…HGYLQQQQPN (75 aa).

It catalyses the reaction S-ubiquitinyl-[E2 ubiquitin-conjugating enzyme]-L-cysteine + [acceptor protein]-L-lysine = [E2 ubiquitin-conjugating enzyme]-L-cysteine + N(6)-ubiquitinyl-[acceptor protein]-L-lysine.. Its pathway is protein modification; protein ubiquitination. In terms of biological role, possesses E3 ubiquitin-protein ligase in vitro. May be involved in cell death signaling. This chain is U-box domain-containing protein 57 (PUB57), found in Oryza sativa subsp. japonica (Rice).